A 456-amino-acid chain; its full sequence is Probable glycine dehydrogenase (decarboxylating) subunit 1 (456 aa).

This sequence belongs to the GcvP family. N-terminal subunit subfamily. As to quaternary structure, the glycine cleavage system is composed of four proteins: P, T, L and H. In this organism, the P 'protein' is a heterodimer of two subunits.

It carries out the reaction N(6)-[(R)-lipoyl]-L-lysyl-[glycine-cleavage complex H protein] + glycine + H(+) = N(6)-[(R)-S(8)-aminomethyldihydrolipoyl]-L-lysyl-[glycine-cleavage complex H protein] + CO2. The glycine cleavage system catalyzes the degradation of glycine. The P protein binds the alpha-amino group of glycine through its pyridoxal phosphate cofactor; CO(2) is released and the remaining methylamine moiety is then transferred to the lipoamide cofactor of the H protein. This Legionella pneumophila (strain Lens) protein is Probable glycine dehydrogenase (decarboxylating) subunit 1.